Here is a 1596-residue protein sequence, read N- to C-terminus: Transcription factor Zelda (1596 aa).

3 disordered regions span residues methionine 1–glutamine 143, serine 209–alanine 273, and threonine 490–proline 530. Low complexity predominate over residues alanine 13–aspartate 24. Over residues serine 25–glycine 53 the composition is skewed to gly residues. A compositionally biased stretch (polar residues) spans asparagine 60–asparagine 72. 2 stretches are compositionally biased toward low complexity: residues glutamine 73 to glutamine 123 and serine 226 to glycine 267. Residues glycine 501–arginine 518 show a composition bias toward gly residues. The C2H2-type 1 zinc finger occupies tyrosine 552 to histidine 576. 4 disordered regions span residues asparagine 578–alanine 813, glutamate 825–leucine 945, glycine 1017–threonine 1074, and glutamine 1252–proline 1322. The segment covering arginine 610–glutamine 634 has biased composition (low complexity). The span at proline 635 to proline 653 shows a compositional bias: pro residues. Over residues tyrosine 656–glycine 668 the composition is skewed to gly residues. Over residues serine 673–threonine 682 the composition is skewed to polar residues. Low complexity-rich tracts occupy residues glutamine 683 to tyrosine 709 and asparagine 719 to serine 753. A compositionally biased stretch (polar residues) spans proline 768 to methionine 781. The span at threonine 796–alanine 813 shows a compositional bias: low complexity. Positions threonine 830–histidine 840 are enriched in basic residues. A compositionally biased stretch (low complexity) spans serine 849–threonine 858. Residues glutamine 864–histidine 877 show a composition bias toward basic and acidic residues. A compositionally biased stretch (low complexity) spans histidine 879–proline 916. A transactivation activation domain (TAD) region spans residues serine 904–asparagine 1297. Residues arginine 921–threonine 932 are compositionally biased toward polar residues. Residues threonine 933 to methionine 944 are compositionally biased toward pro residues. Basic and acidic residues predominate over residues glutamine 1019 to glutamine 1036. Low complexity-rich tracts occupy residues leucine 1037 to serine 1062 and glutamine 1252 to glutamine 1275. 2 stretches are compositionally biased toward polar residues: residues isoleucine 1276–glutamine 1286 and serine 1309–proline 1322. Residues isoleucine 1326 to histidine 1349 form a C2H2-type 2 zinc finger. Residues phenylalanine 1355–arginine 1378 form a C2H2-type 3; degenerate zinc finger. 2 consecutive C2H2-type zinc fingers follow at residues histidine 1384 to histidine 1407 and histidine 1413 to histidine 1435.

As to expression, zygotically expressed in the developing embryonic germ layers, nervous system, imaginal disk primordia and in larval wing and eye disks. In terms of tissue distribution, detected in the germline cells of the ovary, in unfertilized eggs and throughout early development. Later, it becomes mostly restricted to the nervous system and specific head regions. Also expressed in imaginal wing disks in third instar larvae.

Its subcellular location is the nucleus. It is found in the chromosome. In terms of biological role, transcription factor required for zygotic genome activation (ZGA), a critical event in early embryonic development during which the developmental control passes from maternally provided mRNAs to the expression of the zygotic genome after fertilization. Binds to regulatory DNA sequences containing a 5'-CAGGTAG-3' sequence motif, which are highly enriched among developmental enhancers. Within 1 hour into development, or by the embryo's 8th nuclear cycle, binds the majority of its motifs genome-wide. Zelda-binding promotes nucleosome depletion and chromatin accessibility, thereby facilitating the binding of patterning transcription factors, including the binding of the dorsoventral patterning transcription factors dorsal (dl) and twist (twi), and the anteroposterior patterning transcription factors bicoid (bcd) and caudal (cad). Promotes the activity of patterning transcription factors, such as bcd and dl, by lowering the concentration threshold required for transcriptional activation. Required both for the earliest (minor) and major waves of transcription during ZGA. Also involved in maternal mRNA clearance during the maternal-to-zygote transition by promoting expression of microRNAs (miRNAs), such as miR-1, miR-9a and miR-309, which mediate degradation of maternally-loaded RNAs. Also involved in post-blastoderm development: nvolved in nervous system development by maintaining neuroblasts in an undifferentiated state and equired for wing disk development. Functionally, constitutes the main isoform expressed throughout development. Transcription factor required for zygotic genome activation (ZGA). Acts as a dominant negative inhibitor of transcription factor activity of isoform A. The sequence is that of Transcription factor Zelda from Drosophila melanogaster (Fruit fly).